The sequence spans 315 residues: Serine/threonine-protein phosphatase PP2A catalytic subunit 2 (315 aa).

Mn(2+) contacts are provided by D62, H64, D90, and N122. H123 (proton donor) is an active-site residue. Mn(2+) is bound by residues H172 and H247. The disordered stretch occupies residues 294-315 (QFEPAPRENEPHTTRRVPDYFL). The span at 298–315 (APRENEPHTTRRVPDYFL) shows a compositional bias: basic and acidic residues. Leucine methyl ester is present on L315.

It belongs to the PPP phosphatase family. PP-2A subfamily. The cofactor is Mn(2+). Post-translationally, reversibly methyl esterified on Leu-315 by leucine carboxyl methyltransferase 1 (PPM1) and protein phosphatase methylesterase 1 (PPE1). Carboxyl methylation influences the affinity of the catalytic subunit for the different regulatory subunits, thereby modulating the PP2A holoenzyme's substrate specificity, enzyme activity and cellular localization.

The catalysed reaction is O-phospho-L-seryl-[protein] + H2O = L-seryl-[protein] + phosphate. It carries out the reaction O-phospho-L-threonyl-[protein] + H2O = L-threonyl-[protein] + phosphate. The polypeptide is Serine/threonine-protein phosphatase PP2A catalytic subunit 2 (Ppn2) (Paramecium tetraurelia).